The chain runs to 154 residues: Cytochrome c oxidase subunit 5A, mitochondrial (154 aa).

The transit peptide at Met1 to Tyr45 directs the protein to the mitochondrion. Positions Leu2–Gly21 match the SIFI-degron motif. An N6-acetyllysine mark is found at Lys91 and Lys117. At Thr145 the chain carries Phosphothreonine.

This sequence belongs to the cytochrome c oxidase subunit 5A family. Component of the cytochrome c oxidase (complex IV, CIV), a multisubunit enzyme composed of 14 subunits. The complex is composed of a catalytic core of 3 subunits MT-CO1, MT-CO2 and MT-CO3, encoded in the mitochondrial DNA, and 11 supernumerary subunits COX4I, COX5A, COX5B, COX6A, COX6B, COX6C, COX7A, COX7B, COX7C, COX8 and NDUFA4, which are encoded in the nuclear genome. The complex exists as a monomer or a dimer and forms supercomplexes (SCs) in the inner mitochondrial membrane with NADH-ubiquinone oxidoreductase (complex I, CI) and ubiquinol-cytochrome c oxidoreductase (cytochrome b-c1 complex, complex III, CIII), resulting in different assemblies (supercomplex SCI(1)III(2)IV(1) and megacomplex MCI(2)III(2)IV(2)). Interacts with AFG1L. Interacts with RAB5IF. Post-translationally, in response to mitochondrial stress, the precursor protein is ubiquitinated by the SIFI complex in the cytoplasm before mitochondrial import, leading to its degradation. Within the SIFI complex, UBR4 initiates ubiquitin chain that are further elongated or branched by KCMF1.

It is found in the mitochondrion inner membrane. The protein operates within energy metabolism; oxidative phosphorylation. Component of the cytochrome c oxidase, the last enzyme in the mitochondrial electron transport chain which drives oxidative phosphorylation. The respiratory chain contains 3 multisubunit complexes succinate dehydrogenase (complex II, CII), ubiquinol-cytochrome c oxidoreductase (cytochrome b-c1 complex, complex III, CIII) and cytochrome c oxidase (complex IV, CIV), that cooperate to transfer electrons derived from NADH and succinate to molecular oxygen, creating an electrochemical gradient over the inner membrane that drives transmembrane transport and the ATP synthase. Cytochrome c oxidase is the component of the respiratory chain that catalyzes the reduction of oxygen to water. Electrons originating from reduced cytochrome c in the intermembrane space (IMS) are transferred via the dinuclear copper A center (CU(A)) of subunit 2 and heme A of subunit 1 to the active site in subunit 1, a binuclear center (BNC) formed by heme A3 and copper B (CU(B)). The BNC reduces molecular oxygen to 2 water molecules using 4 electrons from cytochrome c in the IMS and 4 protons from the mitochondrial matrix. This chain is Cytochrome c oxidase subunit 5A, mitochondrial (COX5A), found in Notamacropus parma (Parma wallaby).